A 160-amino-acid chain; its full sequence is Protein-export protein SecB (160 aa).

The protein belongs to the SecB family. In terms of assembly, homotetramer, a dimer of dimers. One homotetramer interacts with 1 SecA dimer.

The protein resides in the cytoplasm. Functionally, one of the proteins required for the normal export of preproteins out of the cell cytoplasm. It is a molecular chaperone that binds to a subset of precursor proteins, maintaining them in a translocation-competent state. It also specifically binds to its receptor SecA. In Azorhizobium caulinodans (strain ATCC 43989 / DSM 5975 / JCM 20966 / LMG 6465 / NBRC 14845 / NCIMB 13405 / ORS 571), this protein is Protein-export protein SecB.